The following is a 198-amino-acid chain: uncharacterized protein (198 aa).

The segment at 1-23 (MYFGKTRQSDQSGRVPPNQNVTT) is disordered. Residues 9-23 (SDQSGRVPPNQNVTT) are compositionally biased toward polar residues. The Mo-molybdopterin site is built by Cys75, His144, and Arg149.

It depends on Mo-molybdopterin as a cofactor.

This is an uncharacterized protein from Bacillus subtilis (strain 168).